The primary structure comprises 165 residues: Chorismate pyruvate-lyase (165 aa).

The substrate site is built by M35, R77, L115, and E156.

It belongs to the UbiC family. As to quaternary structure, monomer.

The protein resides in the cytoplasm. It catalyses the reaction chorismate = 4-hydroxybenzoate + pyruvate. It functions in the pathway cofactor biosynthesis; ubiquinone biosynthesis. Removes the pyruvyl group from chorismate, with concomitant aromatization of the ring, to provide 4-hydroxybenzoate (4HB) for the ubiquinone pathway. In Citrobacter koseri (strain ATCC BAA-895 / CDC 4225-83 / SGSC4696), this protein is Chorismate pyruvate-lyase.